The following is a 181-amino-acid chain: MSIKKENTLDYSKITATLMKTFNYKSVMQVPKVDKVVINMGVGDAIFNVKVLDDVVEELKLLSGQSPVITKAKKAISNFKLREGMPIGAKVTLRGARKEAFLYKLTRLVLPRVRDFRGISGKSFDGRGNYALGLKEQIVFPEINIDKVKKIRGMDIIIVTTAKNNTQAKKLLELYGMPFKN.

This sequence belongs to the universal ribosomal protein uL5 family. As to quaternary structure, part of the 50S ribosomal subunit; part of the 5S rRNA/L5/L18/L25 subcomplex. Contacts the 5S rRNA and the P site tRNA. Forms a bridge to the 30S subunit in the 70S ribosome.

Functionally, this is one of the proteins that bind and probably mediate the attachment of the 5S RNA into the large ribosomal subunit, where it forms part of the central protuberance. In the 70S ribosome it contacts protein S13 of the 30S subunit (bridge B1b), connecting the 2 subunits; this bridge is implicated in subunit movement. Contacts the P site tRNA; the 5S rRNA and some of its associated proteins might help stabilize positioning of ribosome-bound tRNAs. The sequence is that of Large ribosomal subunit protein uL5 from Aster yellows witches'-broom phytoplasma (strain AYWB).